A 640-amino-acid chain; its full sequence is RecBCD enzyme subunit RecD (640 aa).

ATP is bound at residue 194–201 (GGPGTGKT).

The protein belongs to the RecD family. As to quaternary structure, heterotrimer of RecB, RecC and RecD. All subunits contribute to DNA-binding.

The enzyme catalyses Couples ATP hydrolysis with the unwinding of duplex DNA at the replication fork by translocating in the 5'-3' direction. This creates two antiparallel DNA single strands (ssDNA). The leading ssDNA polymer is the template for DNA polymerase III holoenzyme which synthesizes a continuous strand.. It catalyses the reaction ATP + H2O = ADP + phosphate + H(+). Functionally, a helicase/nuclease that prepares dsDNA breaks (DSB) for recombinational DNA repair. Binds to DSBs and unwinds DNA via a highly rapid and processive ATP-dependent bidirectional helicase activity. Unwinds dsDNA until it encounters a Chi (crossover hotspot instigator) sequence from the 3' direction. Cuts ssDNA a few nucleotides 3' to the Chi site. The properties and activities of the enzyme are changed at Chi. The Chi-altered holoenzyme produces a long 3'-ssDNA overhang and facilitates RecA-binding to the ssDNA for homologous DNA recombination and repair. Holoenzyme degrades any linearized DNA that is unable to undergo homologous recombination. In the holoenzyme this subunit has ssDNA-dependent ATPase and 5'-3' helicase activity. When added to pre-assembled RecBC greatly stimulates nuclease activity and augments holoenzyme processivity. Negatively regulates the RecA-loading ability of RecBCD. The protein is RecBCD enzyme subunit RecD of Haemophilus influenzae (strain ATCC 51907 / DSM 11121 / KW20 / Rd).